A 262-amino-acid polypeptide reads, in one-letter code: Small ribosomal subunit protein eS1 (262 aa).

The protein belongs to the eukaryotic ribosomal protein eS1 family. As to quaternary structure, component of the small ribosomal subunit. Mature ribosomes consist of a small (40S) and a large (60S) subunit. The 40S subunit contains about 33 different proteins and 1 molecule of RNA (18S). The 60S subunit contains about 49 different proteins and 3 molecules of RNA (25S, 5.8S and 5S).

It localises to the cytoplasm. This Theileria annulata protein is Small ribosomal subunit protein eS1.